A 478-amino-acid chain; its full sequence is NADH oxidase (478 aa).

Residues G8–A12, D33, C43, V80, A111–A114, K149, and Y177 each bind FAD. Catalysis depends on H11, which acts as the Proton acceptor. C43 acts as the Redox-active in catalysis. C43 carries the cysteine sulfinic acid (-SO2H) modification. NAD(+) is bound by residues V170–A185, D197, and G264. Residues L295–G305, L322, A323, and T324 contribute to the FAD site. An NAD(+)-binding site is contributed by A353. F450 contributes to the FAD binding site.

It belongs to the class-III pyridine nucleotide-disulfide oxidoreductase family. FAD serves as cofactor.

It carries out the reaction 2 NADH + O2 + 2 H(+) = 2 NAD(+) + 2 H2O. Its function is as follows. Catalyzes the four-electron reduction of molecular oxygen to water. The polypeptide is NADH oxidase (nox) (Mycoplasma genitalium (strain ATCC 33530 / DSM 19775 / NCTC 10195 / G37) (Mycoplasmoides genitalium)).